The following is a 1033-amino-acid chain: Probable beta-glucosidase E (1033 aa).

The interval 1–71 (MAPPDSTHGG…RSGSYKLRPV (71 aa)) is disordered. At 1–161 (MAPPDSTHGG…PVKYARIWWR (161 aa)) the chain is on the cytoplasmic side. Basic and acidic residues-rich tracts occupy residues 11–20 (SFRDHLKTND) and 59–71 (DLER…LRPV). The chain crosses the membrane as a helical; Signal-anchor for type II membrane protein span at residues 162–182 (TLLAVVVTLVVVVWGFLSFAV). Residues 183–1033 (SHREEPTVWP…SRDLPLMGEY (851 aa)) are Extracellular-facing. 3 N-linked (GlcNAc...) asparagine glycosylation sites follow: Asn-224, Asn-232, and Asn-418. Asp-446 is a catalytic residue. 6 N-linked (GlcNAc...) asparagine glycosylation sites follow: Asn-489, Asn-528, Asn-593, Asn-909, Asn-918, and Asn-976.

The protein belongs to the glycosyl hydrolase 3 family.

It localises to the cell membrane. The enzyme catalyses Hydrolysis of terminal, non-reducing beta-D-glucosyl residues with release of beta-D-glucose.. Its pathway is glycan metabolism; cellulose degradation. Functionally, beta-glucosidases are one of a number of cellulolytic enzymes involved in the degradation of cellulosic biomass. Catalyzes the last step releasing glucose from the inhibitory cellobiose. This Aspergillus fumigatus (strain CBS 144.89 / FGSC A1163 / CEA10) (Neosartorya fumigata) protein is Probable beta-glucosidase E (bglE).